Reading from the N-terminus, the 265-residue chain is Auxin-responsive protein IAA22 (265 aa).

Disordered stretches follow at residues 54 to 88 (LSTP…ERRP) and 172 to 199 (DGRE…SPAM). Over residues 65–88 (LMNKMKPCSDEGHGSRDAAQERRP) the composition is skewed to basic and acidic residues. Positions 91-194 (TMFVKVNLEG…GVDQVSERPD (104 aa)) constitute a PB1 domain.

It belongs to the Aux/IAA family. Homodimers and heterodimers. Highly expressed in flowers. Expressed in roots and seedlings.

It is found in the nucleus. Aux/IAA proteins are short-lived transcriptional factors that function as repressors of early auxin response genes at low auxin concentrations. This chain is Auxin-responsive protein IAA22 (IAA22), found in Oryza sativa subsp. japonica (Rice).